Reading from the N-terminus, the 308-residue chain is Aspartate carbamoyltransferase catalytic subunit (308 aa).

R49 and T50 together coordinate carbamoyl phosphate. K77 contacts L-aspartate. 3 residues coordinate carbamoyl phosphate: R99, H127, and Q130. Positions 160 and 211 each coordinate L-aspartate. A252 and P253 together coordinate carbamoyl phosphate.

The protein belongs to the aspartate/ornithine carbamoyltransferase superfamily. ATCase family. As to quaternary structure, heterododecamer (2C3:3R2) of six catalytic PyrB chains organized as two trimers (C3), and six regulatory PyrI chains organized as three dimers (R2).

The catalysed reaction is carbamoyl phosphate + L-aspartate = N-carbamoyl-L-aspartate + phosphate + H(+). Its pathway is pyrimidine metabolism; UMP biosynthesis via de novo pathway; (S)-dihydroorotate from bicarbonate: step 2/3. In terms of biological role, catalyzes the condensation of carbamoyl phosphate and aspartate to form carbamoyl aspartate and inorganic phosphate, the committed step in the de novo pyrimidine nucleotide biosynthesis pathway. In Geobacillus kaustophilus (strain HTA426), this protein is Aspartate carbamoyltransferase catalytic subunit.